Consider the following 491-residue polypeptide: N-succinylglutamate 5-semialdehyde dehydrogenase (491 aa).

NAD(+) is bound at residue 223 to 228; sequence GSANTG. Residues Glu246 and Cys280 contribute to the active site.

This sequence belongs to the aldehyde dehydrogenase family. AstD subfamily.

The catalysed reaction is N-succinyl-L-glutamate 5-semialdehyde + NAD(+) + H2O = N-succinyl-L-glutamate + NADH + 2 H(+). It participates in amino-acid degradation; L-arginine degradation via AST pathway; L-glutamate and succinate from L-arginine: step 4/5. Catalyzes the NAD-dependent reduction of succinylglutamate semialdehyde into succinylglutamate. The sequence is that of N-succinylglutamate 5-semialdehyde dehydrogenase from Photorhabdus laumondii subsp. laumondii (strain DSM 15139 / CIP 105565 / TT01) (Photorhabdus luminescens subsp. laumondii).